The following is a 465-amino-acid chain: Neutrophil collagenase (465 aa).

The signal sequence occupies residues 1 to 20 (MFRLKTLPLLIFLHTQLANA). The propeptide at 21 to 100 (FPVPEHLEEK…CGVPDSGDFL (80 aa)) is activation peptide. Asparagine 55 carries N-linked (GlcNAc...) asparagine glycosylation. Positions 89–96 (PRCGVPDS) match the Cysteine switch motif. Cysteine 91 contributes to the Zn(2+) binding site. Asparagine 112 carries N-linked (GlcNAc...) asparagine glycosylation. A Ca(2+)-binding site is contributed by aspartate 157. Residues histidine 167 and aspartate 169 each contribute to the Zn(2+) site. Ca(2+) is bound by residues aspartate 174, glycine 175, asparagine 177, and isoleucine 179. Histidine 182 contributes to the Zn(2+) binding site. The Ca(2+) site is built by glycine 189, glycine 191, and aspartate 193. Histidine 195 contacts Zn(2+). Ca(2+)-binding residues include aspartate 197 and glutamate 200. Histidine 217 is a Zn(2+) binding site. Glutamate 218 is an active-site residue. The Zn(2+) site is built by histidine 221 and histidine 227. Hemopexin repeat units lie at residues 276 to 325 (PKAC…WPFL), 326 to 372 (PNGL…GFPR), 374 to 420 (VQAI…FPGV), and 421 to 464 (NCRV…WLNC). Cysteine 279 and cysteine 464 form a disulfide bridge. Residue aspartate 286 participates in Ca(2+) binding. Ca(2+)-binding residues include aspartate 378 and aspartate 425.

Belongs to the peptidase M10A family. The cofactor is Ca(2+). Zn(2+) serves as cofactor. In terms of tissue distribution, neutrophils. Expressed in uterus. Low levels in kidney and muscle.

Its subcellular location is the cytoplasmic granule. The protein localises to the secreted. The protein resides in the extracellular space. It localises to the extracellular matrix. It catalyses the reaction Cleavage of interstitial collagens in the triple helical domain. Unlike EC 3.4.24.7, this enzyme cleaves type III collagen more slowly than type I.. Cannot be activated without removal of the activation peptide. Activated by matrilysin. In terms of biological role, can degrade fibrillar type I, II, and III collagens. May play a role in the degradation of collagen fibers during uterine involution. The polypeptide is Neutrophil collagenase (Mmp8) (Mus musculus (Mouse)).